A 364-amino-acid polypeptide reads, in one-letter code: Suberization-associated anionic peroxidase 1 (364 aa).

Positions 1 to 25 (MGFRLSHLSLALSFVALALAGVAIY) are cleaved as a signal peptide. A glycan (N-linked (GlcNAc...) asparagine) is linked at Asn36. Disulfide bonds link Cys81/Cys160 and Cys112/Cys117. Catalysis depends on His110, which acts as the Proton acceptor. Ca(2+) is bound by residues Asp111, Val114, Gly116, and Asp118. Residues Asn127, Asn162, and Asn200 are each glycosylated (N-linked (GlcNAc...) asparagine). Intrachain disulfides connect Cys167–Cys353 and Cys246–Cys265. Pro209 is a substrate binding site. N-linked (GlcNAc...) asparagine glycosylation is found at Asn214 and Asn226. Residue His239 participates in heme b binding. Residue Thr240 coordinates Ca(2+). An N-linked (GlcNAc...) asparagine glycan is attached at Asn264. Positions 278, 280, and 285 each coordinate Ca(2+).

The protein belongs to the peroxidase family. Classical plant (class III) peroxidase subfamily. The cofactor is Ca(2+). Requires heme b as cofactor.

Its subcellular location is the secreted. The enzyme catalyses 2 a phenolic donor + H2O2 = 2 a phenolic radical donor + 2 H2O. Removal of H(2)O(2), oxidation of toxic reductants, biosynthesis and degradation of lignin, suberization, auxin catabolism, response to environmental stresses such as wounding, pathogen attack and oxidative stress. These functions might be dependent on each isozyme/isoform in each plant tissue. In terms of biological role, suggested to catalyze the deposition of the aromatic residues of suberin on the cell wall and thus play a role in cell-suberization. This Solanum lycopersicum (Tomato) protein is Suberization-associated anionic peroxidase 1 (TAP1).